The chain runs to 381 residues: MSTIKYRAACDHCSATKIKCTQERPQCTRCRALGRDCHYSRSLRAGKPPRSSQGLNRKISNAPVLPRQNTPVSNPTSMSSKPEHWPTMPTSYPTPQAAAPTAEIFHFPDLSSAATSSSSSPANTDWFFDFNSGSADGLGDLTPPLVVTAPHLPPLDHDLKHPVFPTQGIHFGAFADLISLPPASPLLPSPSLADGDRCAKLATETLNSLYDMPANHLHGSGNRHPSVDQTLSTCARAVQAIHELVNCSCQKDLYLPMLIIIVASKIVAWYQAVAYIRDPGTGFADGKQCFREVVVEGPLNIGAYQLDDEVGWTLKNQIVLGQLQRLNEAVNIYDRRYCSDSLGGQMTEGGKLYASMVGFVKSTLQFTIHALEGRIRSGHPR.

Positions 10–37 (CDHCSATKIKCTQERPQCTRCRALGRDC) form a DNA-binding region, zn(2)-C6 fungal-type. Residues 41-88 (RSLRAGKPPRSSQGLNRKISNAPVLPRQNTPVSNPTSMSSKPEHWPTM) are disordered. Polar residues-rich tracts occupy residues 50 to 59 (RSSQGLNRKI) and 67 to 80 (RQNT…SMSS).

It is found in the nucleus. Functionally, transcription factor that regulates the expression of the hps1-dma1 gene cluster that probably mediates the biosynthesis a derivative of cyclopiazonic acid (CPA). Further studies are required to whether the CPA-like hps1-dma1 cluster is functional or a non-functional relic reflecting evolution of D.septosporum. The sequence is that of Hps1-dma1 cluster transcription factor tfc7 (tfc7) from Dothistroma septosporum (strain NZE10 / CBS 128990) (Red band needle blight fungus).